Reading from the N-terminus, the 194-residue chain is Large ribosomal subunit protein uL6z/uL6y (194 aa).

Thr75 bears the Phosphothreonine mark.

This sequence belongs to the universal ribosomal protein uL6 family.

The sequence is that of Large ribosomal subunit protein uL6z/uL6y (RPL9B) from Arabidopsis thaliana (Mouse-ear cress).